The sequence spans 44 residues: Photosystem I reaction center subunit IX (44 aa).

The helical transmembrane segment at 7–27 (YLSVAPVLSTLWFGALAGLLI) threads the bilayer.

Belongs to the PsaJ family.

Its subcellular location is the plastid. It localises to the chloroplast thylakoid membrane. Its function is as follows. May help in the organization of the PsaE and PsaF subunits. The polypeptide is Photosystem I reaction center subunit IX (Oryza nivara (Indian wild rice)).